Consider the following 234-residue polypeptide: Large ribosomal subunit protein uL1 (234 aa).

Belongs to the universal ribosomal protein uL1 family. Part of the 50S ribosomal subunit.

Functionally, binds directly to 23S rRNA. The L1 stalk is quite mobile in the ribosome, and is involved in E site tRNA release. Its function is as follows. Protein L1 is also a translational repressor protein, it controls the translation of the L11 operon by binding to its mRNA. This Wolinella succinogenes (strain ATCC 29543 / DSM 1740 / CCUG 13145 / JCM 31913 / LMG 7466 / NCTC 11488 / FDC 602W) (Vibrio succinogenes) protein is Large ribosomal subunit protein uL1.